Reading from the N-terminus, the 142-residue chain is MPIAAATDFALNAILRPISDIFVLIYGLLEPINAHLIPEHTNFIYGQLSLLLWGTKFLATILGVTANNATAMANFTDVLHTLSENSYHFFGTVEGESGMAYIAKHSYIELSQNQQLSEDMAVKFARAVNSTIIYFVKVFEYL.

2 consecutive transmembrane segments (helical) span residues 12-29 (NAIL…YGLL) and 44-66 (IYGQ…GVTA).

It is found in the cell membrane. This is an uncharacterized protein from Archaeoglobus fulgidus (strain ATCC 49558 / DSM 4304 / JCM 9628 / NBRC 100126 / VC-16).